A 387-amino-acid chain; its full sequence is Probable tRNA sulfurtransferase (387 aa).

One can recognise a THUMP domain in the interval S67–S167. ATP is bound by residues L185 to L186, T210 to F211, R269, G287, and Q296.

The protein belongs to the ThiI family.

It localises to the cytoplasm. It catalyses the reaction [ThiI sulfur-carrier protein]-S-sulfanyl-L-cysteine + a uridine in tRNA + 2 reduced [2Fe-2S]-[ferredoxin] + ATP + H(+) = [ThiI sulfur-carrier protein]-L-cysteine + a 4-thiouridine in tRNA + 2 oxidized [2Fe-2S]-[ferredoxin] + AMP + diphosphate. It carries out the reaction [ThiS sulfur-carrier protein]-C-terminal Gly-Gly-AMP + S-sulfanyl-L-cysteinyl-[cysteine desulfurase] + AH2 = [ThiS sulfur-carrier protein]-C-terminal-Gly-aminoethanethioate + L-cysteinyl-[cysteine desulfurase] + A + AMP + 2 H(+). It participates in cofactor biosynthesis; thiamine diphosphate biosynthesis. Its function is as follows. Catalyzes the ATP-dependent transfer of a sulfur to tRNA to produce 4-thiouridine in position 8 of tRNAs, which functions as a near-UV photosensor. Also catalyzes the transfer of sulfur to the sulfur carrier protein ThiS, forming ThiS-thiocarboxylate. This is a step in the synthesis of thiazole, in the thiamine biosynthesis pathway. The sulfur is donated as persulfide by IscS. This Mycoplasma pneumoniae (strain ATCC 29342 / M129 / Subtype 1) (Mycoplasmoides pneumoniae) protein is Probable tRNA sulfurtransferase.